A 109-amino-acid polypeptide reads, in one-letter code: Transcription initiation factor IIA subunit 2 (109 aa).

The protein belongs to the TFIIA subunit 2 family. As to quaternary structure, TFIIA is a heterodimer of the large unprocessed subunit 1 and a small subunit gamma. It was originally believed to be a heterotrimer of an alpha (p35), a beta (p19) and a gamma subunit (p12). Interacts with NCOA6 general coactivator. TFIIA forms a complex with TBP. Interacts with HSF1 (via transactivation domain). Part of TBP-based Pol II pre-initiation complex (PIC), in which Pol II core assembles with general transcription factors and other specific initiation factors including GTF2E1, GTF2E2, GTF2F1, GTF2F2, TCEA1, ERCC2, ERCC3, GTF2H2, GTF2H3, GTF2H4, GTF2H5, GTF2A1, GTF2A2, GTF2B and TBP; this large multi-subunit PIC complex mediates DNA unwinding and targets Pol II core to the transcription start site where the first phosphodiester bond forms.

The protein resides in the nucleus. Its function is as follows. TFIIA is a component of the transcription machinery of RNA polymerase II and plays an important role in transcriptional activation. TFIIA in a complex with TBP mediates transcriptional activity. This chain is Transcription initiation factor IIA subunit 2 (Gtf2a2), found in Rattus norvegicus (Rat).